Consider the following 1089-residue polypeptide: Electroneutral sodium bicarbonate exchanger 1 (1089 aa).

The Extracellular portion of the chain corresponds to 1 to 476; the sequence is MPAGSNEPDG…DYRDALSLQC (476 aa). Positions 55-90 are disordered; the sequence is LGRQSHRHHRTHGQKHRRRGGRGKGASQGEEGLEAL. Residues 58–76 show a composition bias toward basic residues; the sequence is QSHRHHRTHGQKHRRRGGR. A helical transmembrane segment spans residues 477–497; sequence LASFLFLYCACMSPVITFGGL. Over 498 to 505 the chain is Cytoplasmic; that stretch reads LGEATEGR. A helical transmembrane segment spans residues 506–526; that stretch reads ISAIESLFGASMTGIAYSLFA. The Extracellular portion of the chain corresponds to 527–563; that stretch reads GQPLTILGSTGPVLVFEKILFKFCKDYALSYLSLRAL. The chain crosses the membrane as a helical span at residues 564–584; that stretch reads IGLWTAFLCIVLVATDASSLV. Over 585-593 the chain is Cytoplasmic; that stretch reads CYITRFTEE. A helical membrane pass occupies residues 594–614; it reads AFASLICIIFIYEAIEKLIHL. Over 615 to 685 the chain is Extracellular; the sequence is AETYPIHMHS…EFMGSACGHH (71 aa). 2 cysteine pairs are disulfide-bonded: Cys634-Cys682 and Cys636-Cys670. N-linked (GlcNAc) asparagine glycosylation occurs at Asn644. Residues 686 to 706 traverse the membrane as a helical segment; it reads GPYTPDVLFWSCILFFATFIV. At 707 to 729 the chain is on the cytoplasmic side; that stretch reads SSTLKTFKTSRYFPTRVRSMVSD. Residues 730-750 form a helical membrane-spanning segment; it reads FAVFLTIFTMVVLDFLIGVPS. At 751-776 the chain is on the extracellular side; sequence PKLQVPNVFKPTRDDRGWFINPIGPN. A helical transmembrane segment spans residues 777–797; the sequence is PWWTVIAAIIPALLCTILIFM. Residues 798 to 822 lie on the Cytoplasmic side of the membrane; sequence DQQITAVIINRKEHKLKKGCGYHLD. Residues 823–843 form a helical membrane-spanning segment; sequence LLMVAVMLGVCSIMGLPWFVA. The Extracellular segment spans residues 844–879; that stretch reads ATVLSITHVNSLKLESECSAPGEQPKFLGIREQRVT. The chain crosses the membrane as a helical span at residues 880–900; the sequence is GLMIFVLMGCSVFMTAVLKFI. Topologically, residues 901–902 are cytoplasmic; the sequence is PM. Residues 903 to 923 traverse the membrane as a helical segment; that stretch reads PVLYGVFLYMGVSSLQGIQFF. Topologically, residues 924–960 are extracellular; that stretch reads DRLKLFGMPAKHQPDFIYLRHVPLRKVHLFTLVQLTC. The helical transmembrane segment at 961–981 threads the bilayer; sequence LVLLWVIKASPAAIVFPMMVL. Residues 982-1089 are Cytoplasmic-facing; the sequence is ALVFVRKVMD…GNTKEKSPFN (108 aa).

The protein belongs to the anion exchanger (TC 2.A.31) family. Homodimer. Expressed in the hippocampal neurons (at protein level). Highly expressed in brain with lower levels in lung, kidney and heart. In the kidney, there is high expression in the inner medulla, localized to the inner medullary collecting duct. In the brain, there seems to be three transcripts each having a different expression pattern. The smaller 3kb transcript has highest expression levels in the thalamus and the largest 9.5kb transcript has highest levels in the substantia nigra. The middle transcript of 4.4kb, which is also the main transcript in kidney, is highly expressed in thalamus. Hence, the highest levels are observed in the thalamus, amygdala and caudate nucleus and very low expression was seen in the corpus callosum.

The protein localises to the cell membrane. It localises to the apical cell membrane. The protein resides in the basolateral cell membrane. Its subcellular location is the cytoplasmic vesicle. It is found in the secretory vesicle. The protein localises to the synaptic vesicle membrane. The enzyme catalyses 2 hydrogencarbonate(out) + chloride(in) + Na(+)(out) = 2 hydrogencarbonate(in) + chloride(out) + Na(+)(in). In terms of biological role, mediates electroneutral sodium- and carbonate-dependent chloride-HCO3(-) exchange with a Na(+):HCO3(-) stoichiometry of 2:1. Plays a major role in pH regulation in neurons. Mediates sodium reabsorption in the renal cortical collecting ducts. This is Electroneutral sodium bicarbonate exchanger 1 from Mus musculus (Mouse).